We begin with the raw amino-acid sequence, 632 residues long: Probable potassium transport system protein Kup 2 (632 aa).

A run of 12 helical transmembrane segments spans residues 19–39, 58–78, 110–130, 147–167, 178–198, 216–236, 257–277, 290–310, 347–367, 377–397, 404–424, and 429–449; these read FWGLTLGSIGVVFGDIGTSPL, MIVLGVLSLILWSLFIVVTAK, MFLMSLGVIGASMFIGDSMIT, PALEHYVVPLTVFILVVLFAV, AFGPVMVLWFASLAVMGIVHI, FLLSHGTIGLVTLGAVFLAVT, WLFFVLPSLLINYFGQGALVL, MVPELLLLPLVVLATAATVIA, IYLPRVNRLLLIGVMLLVLLF, YGIAVSTTMVADGIMGFVVIW, AAVAAAIIVPFVIVDLSFFSA, and LFEGAWVPLLFGAAMAVTIWT.

This sequence belongs to the HAK/KUP transporter (TC 2.A.72) family.

It localises to the cell inner membrane. It carries out the reaction K(+)(in) + H(+)(in) = K(+)(out) + H(+)(out). Transport of potassium into the cell. Likely operates as a K(+):H(+) symporter. The sequence is that of Probable potassium transport system protein Kup 2 from Bradyrhizobium sp. (strain BTAi1 / ATCC BAA-1182).